Reading from the N-terminus, the 719-residue chain is 1,4-alpha-glucan branching enzyme GlgB (719 aa).

Aspartate 400 serves as the catalytic Nucleophile. Catalysis depends on glutamate 453, which acts as the Proton donor.

Belongs to the glycosyl hydrolase 13 family. GlgB subfamily. As to quaternary structure, monomer.

It carries out the reaction Transfers a segment of a (1-&gt;4)-alpha-D-glucan chain to a primary hydroxy group in a similar glucan chain.. The protein operates within glycan biosynthesis; glycogen biosynthesis. Functionally, catalyzes the formation of the alpha-1,6-glucosidic linkages in glycogen by scission of a 1,4-alpha-linked oligosaccharide from growing alpha-1,4-glucan chains and the subsequent attachment of the oligosaccharide to the alpha-1,6 position. This Chlamydia caviae (strain ATCC VR-813 / DSM 19441 / 03DC25 / GPIC) (Chlamydophila caviae) protein is 1,4-alpha-glucan branching enzyme GlgB.